Consider the following 148-residue polypeptide: Putative cyclin-dependent kinase inhibitor SPL2 (148 aa).

Phosphoserine occurs at positions 59 and 86.

It is found in the cytoplasmic granule. The protein localises to the cytoplasm. Putative cyclin-dependent kinase (CDK) inhibitor necessary and sufficient for PHO pathway-dependent down-regulation of low-affinity phosphate transport. In Saccharomyces cerevisiae (strain ATCC 204508 / S288c) (Baker's yeast), this protein is Putative cyclin-dependent kinase inhibitor SPL2 (SPL2).